Here is a 508-residue protein sequence, read N- to C-terminus: Glycerol kinase (508 aa).

Threonine 15 contributes to the ADP binding site. Residues threonine 15, serine 16, and serine 17 each contribute to the ATP site. Threonine 15 provides a ligand contact to sn-glycerol 3-phosphate. Arginine 19 is a binding site for ADP. Residues arginine 85, glutamate 86, tyrosine 138, and aspartate 251 each contribute to the sn-glycerol 3-phosphate site. Glycerol contacts are provided by arginine 85, glutamate 86, tyrosine 138, aspartate 251, and glutamine 252. Positions 273, 317, and 419 each coordinate ADP. Residues threonine 273, glycine 317, and glycine 419 each contribute to the ATP site.

It belongs to the FGGY kinase family.

The catalysed reaction is glycerol + ATP = sn-glycerol 3-phosphate + ADP + H(+). Its pathway is polyol metabolism; glycerol degradation via glycerol kinase pathway; sn-glycerol 3-phosphate from glycerol: step 1/1. Inhibited by fructose 1,6-bisphosphate (FBP). Functionally, key enzyme in the regulation of glycerol uptake and metabolism. Catalyzes the phosphorylation of glycerol to yield sn-glycerol 3-phosphate. In Mycoplasma pneumoniae (strain ATCC 29342 / M129 / Subtype 1) (Mycoplasmoides pneumoniae), this protein is Glycerol kinase.